Reading from the N-terminus, the 172-residue chain is Large ribosomal subunit protein uL10 (172 aa).

Belongs to the universal ribosomal protein uL10 family. As to quaternary structure, part of the ribosomal stalk of the 50S ribosomal subunit. The N-terminus interacts with L11 and the large rRNA to form the base of the stalk. The C-terminus forms an elongated spine to which L12 dimers bind in a sequential fashion forming a multimeric L10(L12)X complex.

In terms of biological role, forms part of the ribosomal stalk, playing a central role in the interaction of the ribosome with GTP-bound translation factors. This Rhodopseudomonas palustris (strain BisA53) protein is Large ribosomal subunit protein uL10.